A 442-amino-acid chain; its full sequence is F-box/FBD/LRR-repeat protein At2g26030 (442 aa).

An F-box domain is found at 3-49; the sequence is CDRICELPDSLLTQVLSYLPTIDSVKTSVLSKRWEFLWLRVPVLDLK. LRR repeat units lie at residues 128 to 160, 162 to 187, 188 to 214, 234 to 260, 278 to 309, and 324 to 352; these read CNTL…HLED, WYYD…VLIR, PIDF…RLTF, YLNF…DIDS, KRDI…DRYS, and QAAV…ILDF. Positions 358–410 constitute an FBD domain; sequence PEQDGLTYVPQCLLSSLECVEIRELIMGEETGEKLVRYFLKNSVVLKKLILRL.

This chain is F-box/FBD/LRR-repeat protein At2g26030, found in Arabidopsis thaliana (Mouse-ear cress).